A 619-amino-acid polypeptide reads, in one-letter code: ATP-dependent zinc metalloprotease FtsH (619 aa).

The Cytoplasmic portion of the chain corresponds to 1–5 (MKYFK). A helical membrane pass occupies residues 6 to 26 (GISFYIIIFILILVIITFFTA). The Extracellular portion of the chain corresponds to 27-110 (TDNPPKMSYS…VTQPPQPPWW (84 aa)). Residues 111 to 131 (VSMLPTVGLVIILILIWFFFI) traverse the membrane as a helical segment. The Cytoplasmic portion of the chain corresponds to 132–619 (QQSQGGGGGN…GSSQTPQLEG (488 aa)). 204–211 (GPPGTGKT) provides a ligand contact to ATP. Residue H426 coordinates Zn(2+). E427 is an active-site residue. Residues H430 and D502 each coordinate Zn(2+).

This sequence in the central section; belongs to the AAA ATPase family. The protein in the C-terminal section; belongs to the peptidase M41 family. In terms of assembly, homohexamer. The cofactor is Zn(2+).

It is found in the cell membrane. Acts as a processive, ATP-dependent zinc metallopeptidase for both cytoplasmic and membrane proteins. Plays a role in the quality control of integral membrane proteins. The polypeptide is ATP-dependent zinc metalloprotease FtsH (Ruminiclostridium cellulolyticum (strain ATCC 35319 / DSM 5812 / JCM 6584 / H10) (Clostridium cellulolyticum)).